The primary structure comprises 152 residues: Transcriptional repressor NrdR (152 aa).

A zinc finger spans residues 3–34 (CAFCGNPDTQVIDSRVSEDGSSIRRRRRCPAC). An ATP-cone domain is found at 49–139 (PQVVKTAGHR…VYRSFQDISE (91 aa)).

Belongs to the NrdR family. Requires Zn(2+) as cofactor.

In terms of biological role, negatively regulates transcription of bacterial ribonucleotide reductase nrd genes and operons by binding to NrdR-boxes. In Chromobacterium violaceum (strain ATCC 12472 / DSM 30191 / JCM 1249 / CCUG 213 / NBRC 12614 / NCIMB 9131 / NCTC 9757 / MK), this protein is Transcriptional repressor NrdR.